The following is a 215-amino-acid chain: LexA repressor (215 aa).

The H-T-H motif DNA-binding region spans 28–48; it reads RAEIAAELGFSSPNAAEEHLR. Active-site for autocatalytic cleavage activity residues include S133 and K170.

This sequence belongs to the peptidase S24 family. As to quaternary structure, homodimer.

The enzyme catalyses Hydrolysis of Ala-|-Gly bond in repressor LexA.. In terms of biological role, represses a number of genes involved in the response to DNA damage (SOS response), including recA and lexA. In the presence of single-stranded DNA, RecA interacts with LexA causing an autocatalytic cleavage which disrupts the DNA-binding part of LexA, leading to derepression of the SOS regulon and eventually DNA repair. The protein is LexA repressor of Burkholderia mallei (strain NCTC 10247).